We begin with the raw amino-acid sequence, 409 residues long: Failed axon connections homolog (409 aa).

A helical membrane pass occupies residues 68-88; sequence YLTGGALLAAAAYLLHELLVI. The interval 372–393 is disordered; the sequence is DEGAENSFSRTPDTDFTGHSLF.

It belongs to the FAX family.

The protein localises to the membrane. In terms of biological role, may play a role in axonal development. This Mus musculus (Mouse) protein is Failed axon connections homolog (Faxc).